The primary structure comprises 255 residues: Hydroxyacylglutathione hydrolase (255 aa).

Positions 56, 58, 60, 61, 114, 133, and 171 each coordinate Zn(2+).

This sequence belongs to the metallo-beta-lactamase superfamily. Glyoxalase II family. In terms of assembly, monomer. Requires Zn(2+) as cofactor.

It carries out the reaction an S-(2-hydroxyacyl)glutathione + H2O = a 2-hydroxy carboxylate + glutathione + H(+). It functions in the pathway secondary metabolite metabolism; methylglyoxal degradation; (R)-lactate from methylglyoxal: step 2/2. In terms of biological role, thiolesterase that catalyzes the hydrolysis of S-D-lactoyl-glutathione to form glutathione and D-lactic acid. The polypeptide is Hydroxyacylglutathione hydrolase (Bradyrhizobium sp. (strain BTAi1 / ATCC BAA-1182)).